A 396-amino-acid chain; its full sequence is Phosphoglycerate kinase (396 aa).

Residues 21-23, Arg36, 59-62, Arg119, and Arg156 each bind substrate; these read DFN and HLGK. ATP-binding positions include Lys206, Gly294, Glu325, and 352–355; that span reads GGDS.

This sequence belongs to the phosphoglycerate kinase family. As to quaternary structure, monomer.

The protein localises to the cytoplasm. The enzyme catalyses (2R)-3-phosphoglycerate + ATP = (2R)-3-phospho-glyceroyl phosphate + ADP. The protein operates within carbohydrate degradation; glycolysis; pyruvate from D-glyceraldehyde 3-phosphate: step 2/5. The protein is Phosphoglycerate kinase of Listeria innocua serovar 6a (strain ATCC BAA-680 / CLIP 11262).